We begin with the raw amino-acid sequence, 441 residues long: N-succinylarginine dihydrolase (441 aa).

Substrate-binding positions include 19–28 (AGLSFGNEAS), Asn-110, and 137–138 (HR). Glu-174 is an active-site residue. Arg-212 serves as a coordination point for substrate. His-248 is a catalytic residue. 2 residues coordinate substrate: Asp-250 and Asn-359. Residue Cys-365 is the Nucleophile of the active site.

Belongs to the succinylarginine dihydrolase family. Homodimer.

The catalysed reaction is N(2)-succinyl-L-arginine + 2 H2O + 2 H(+) = N(2)-succinyl-L-ornithine + 2 NH4(+) + CO2. It participates in amino-acid degradation; L-arginine degradation via AST pathway; L-glutamate and succinate from L-arginine: step 2/5. In terms of biological role, catalyzes the hydrolysis of N(2)-succinylarginine into N(2)-succinylornithine, ammonia and CO(2). This chain is N-succinylarginine dihydrolase, found in Erwinia tasmaniensis (strain DSM 17950 / CFBP 7177 / CIP 109463 / NCPPB 4357 / Et1/99).